The sequence spans 401 residues: MAKQKFERTKPHVNVGTIGHVDHGKTTLTAAITKVLALQGAAQFVSYDQIDNAPEERARGITIAIRHVEYQTARRHYAHVDCPGHADYIKNMITGAAQMDGAILVVSAPDGPMPQTREHVLLARQVQVPAMVVFLNKVDMMDDEELLELVELELRELLSNHGFPGDEVPIVRGSALAALSSASTDINAPEYKCILDLMNAVDEYIPTPVREIDKPFLMPIEDVFGIKGRGTVVTGRIERGKVKMGDTVEIIGMTHEAPRRTVVTGVEMFQKTLDEGIAGDNVGVLLRGIERTEVERGQVLAAPGSIKPHATFKANVYVLKKEEGGRHTPFFSGYRPQFYIRTTDVTGAIHLPEGVEMVMPGDNIEMTVELIVPVAIEEGLRFAIREGGRTVGAGVVSAIVD.

The 200-residue stretch at 10–209 (KPHVNVGTIG…AVDEYIPTPV (200 aa)) folds into the tr-type G domain. The tract at residues 19–26 (GHVDHGKT) is G1. Residue 19-26 (GHVDHGKT) coordinates GTP. Thr-26 serves as a coordination point for Mg(2+). Residues 60–64 (GITIA) are G2. The tract at residues 81–84 (DCPG) is G3. GTP-binding positions include 81–85 (DCPGH) and 136–139 (NKVD). Residues 136 to 139 (NKVD) form a G4 region. Residues 174-176 (SAL) are G5.

It belongs to the TRAFAC class translation factor GTPase superfamily. Classic translation factor GTPase family. EF-Tu/EF-1A subfamily. As to quaternary structure, monomer.

It localises to the cytoplasm. It catalyses the reaction GTP + H2O = GDP + phosphate + H(+). GTP hydrolase that promotes the GTP-dependent binding of aminoacyl-tRNA to the A-site of ribosomes during protein biosynthesis. The chain is Elongation factor Tu 2 from Roseiflexus sp. (strain RS-1).